The following is a 74-amino-acid chain: Large ribosomal subunit protein uL14c (74 aa).

This sequence belongs to the universal ribosomal protein uL14 family. As to quaternary structure, part of the 50S ribosomal subunit.

The protein localises to the plastid. It localises to the chloroplast. Binds to 23S rRNA. The protein is Large ribosomal subunit protein uL14c (rpl14) of Oenothera ammophila (Evening primerose).